Consider the following 158-residue polypeptide: Large ribosomal subunit protein uL15 (158 aa).

It belongs to the universal ribosomal protein uL15 family. In terms of assembly, part of the 50S ribosomal subunit.

Functionally, binds to the 23S rRNA. This chain is Large ribosomal subunit protein uL15, found in Aeropyrum pernix (strain ATCC 700893 / DSM 11879 / JCM 9820 / NBRC 100138 / K1).